A 151-amino-acid polypeptide reads, in one-letter code: Ribonuclease H (151 aa).

Residues 1–146 (MSDLFAYTDG…ADELARAGMA (146 aa)) form the RNase H type-1 domain. Positions 9, 52, 74, and 138 each coordinate Mg(2+).

Belongs to the RNase H family. In terms of assembly, monomer. Mg(2+) serves as cofactor.

The protein localises to the cytoplasm. The enzyme catalyses Endonucleolytic cleavage to 5'-phosphomonoester.. Functionally, endonuclease that specifically degrades the RNA of RNA-DNA hybrids. The protein is Ribonuclease H of Cereibacter sphaeroides (strain ATCC 17025 / ATH 2.4.3) (Rhodobacter sphaeroides).